The chain runs to 755 residues: MNVIYFPLHIFVVYSRAYTSLVLVGCTNLCAVLFARCLDDHLVSLRMSGSRKEFDVKQILKIRWRWFGHQASSPNSTVDSQQGEFWNRGQTGANGGRKFLDPCSLQLPLASIGYRRSSQLDFQNSPSWPMASTSEVPAFEFTAEDCGGAHWLDRPEVDDGTSEEENESDSSSCRTSNSSQTLSSCHTMEPCTSDEFFQALNHAEQTFKKMENYLRHKQLCDVILVAGDRRIPAHRLVLSSVSDYFAAMFTNDVREARQEEIKMEGVEPNSLWSLIQYAYTGRLELKEDNIECLLSTACLLQLSQVVEACCKFLMKQLHPSNCLGIRSFADAQGCTDLHKVAHNYTMEHFMEVIRNQEFVLLPASEIAKLLASDDMNIPNEETILNALLTWVRHDLEQRRKDLSKLLAYIRLPLLAPQFLADMENNVLFRDDIECQKLIMEAMKYHLLPERRPMLQSPRTKPRKSTVGTLFAVGGMDSTKGATSIEKYDLRTNMWTPVANMNGRRLQFGVAVLDDKLYVVGGRDGLKTLNTVECYNPKTKTWSVMPPMSTHRHGLGVAVLEGPMYAVGGHDGWSYLNTVERWDPQARQWNFVATMSTPRSTVGVAVLSGKLYAVGGRDGSSCLKSVECFDPHTNKWTLCAQMSKRRGGVGVTTWNGLLYAIGGHDAPASNLTSRLSDCVERYDPKTDMWTAVASMSISRDAVGVCLLGDKLYAVGGYDGQAYLNTVEAYDPQTNEWTQVAPLCLGRAGACVVTVKL.

Residues 152 to 184 form a disordered region; sequence LDRPEVDDGTSEEENESDSSSCRTSNSSQTLSS. The span at 158 to 168 shows a compositional bias: acidic residues; it reads DDGTSEEENES. Residues 169 to 184 show a composition bias toward low complexity; it reads DSSSCRTSNSSQTLSS. Positions 220 to 287 constitute a BTB domain; that stretch reads CDVILVAGDR…AYTGRLELKE (68 aa). Kelch repeat units follow at residues 468 to 514, 515 to 561, 563 to 608, 609 to 655, 657 to 708, and 709 to 754; these read TLFA…VLDD, KLYV…VLEG, MYAV…VLSG, KLYA…TWNG, LYAI…LLGD, and KLYA…VTVK.

Expressed in adrenal gland, ovary and thyroid gland and less abundantly in lymph node, prostate, spinal cord, testis and trachea.

The protein resides in the cytoplasm. It is found in the cytoskeleton. The chain is Kelch-like protein 5 (KLHL5) from Homo sapiens (Human).